The following is a 198-amino-acid chain: Elongation factor Ts (198 aa).

The involved in Mg(2+) ion dislocation from EF-Tu stretch occupies residues 81–84 (TDFV).

The protein belongs to the EF-Ts family.

It is found in the cytoplasm. Its function is as follows. Associates with the EF-Tu.GDP complex and induces the exchange of GDP to GTP. It remains bound to the aminoacyl-tRNA.EF-Tu.GTP complex up to the GTP hydrolysis stage on the ribosome. In Pseudothermotoga lettingae (strain ATCC BAA-301 / DSM 14385 / NBRC 107922 / TMO) (Thermotoga lettingae), this protein is Elongation factor Ts.